The following is a 446-amino-acid chain: Tubulin alpha chain-like 3 (446 aa).

Positions 1–4 match the MREC motif motif; that stretch reads MREC. GTP-binding residues include Gln11, Glu78, Ser147, Gly151, Thr152, Thr186, Asn213, and Asn235. Mg(2+) is bound at residue Glu78. The active site involves Glu261.

It belongs to the tubulin family. Dimer of alpha and beta chains. A typical microtubule is a hollow water-filled tube with an outer diameter of 25 nm and an inner diameter of 15 nM. Alpha-beta heterodimers associate head-to-tail to form protofilaments running lengthwise along the microtubule wall with the beta-tubulin subunit facing the microtubule plus end conferring a structural polarity. Microtubules usually have 13 protofilaments but different protofilament numbers can be found in some organisms and specialized cells. The cofactor is Mg(2+). Post-translationally, some glutamate residues at the C-terminus are polyglycylated, resulting in polyglycine chains on the gamma-carboxyl group. Glycylation is mainly limited to tubulin incorporated into axonemes (cilia and flagella) whereas glutamylation is prevalent in neuronal cells, centrioles, axonemes, and the mitotic spindle. Both modifications can coexist on the same protein on adjacent residues, and lowering polyglycylation levels increases polyglutamylation, and reciprocally. Cilia and flagella glycylation is required for their stability and maintenance. Flagella glycylation controls sperm motility. In terms of processing, some glutamate residues at the C-terminus are polyglutamylated, resulting in polyglutamate chains on the gamma-carboxyl group. Polyglutamylation plays a key role in microtubule severing by spastin (SPAST). SPAST preferentially recognizes and acts on microtubules decorated with short polyglutamate tails: severing activity by SPAST increases as the number of glutamates per tubulin rises from one to eight, but decreases beyond this glutamylation threshold. Glutamylation is also involved in cilia motility.

The protein resides in the cytoplasm. It is found in the cytoskeleton. It carries out the reaction GTP + H2O = GDP + phosphate + H(+). Its function is as follows. Tubulin is the major constituent of microtubules, a cylinder consisting of laterally associated linear protofilaments composed of alpha- and beta-tubulin heterodimers. Microtubules grow by the addition of GTP-tubulin dimers to the microtubule end, where a stabilizing cap forms. Below the cap, tubulin dimers are in GDP-bound state, owing to GTPase activity of alpha-tubulin. The chain is Tubulin alpha chain-like 3 (Tubal3) from Mus musculus (Mouse).